Consider the following 210-residue polypeptide: Outer-membrane lipoprotein carrier protein (210 aa).

A signal peptide spans 1 to 22 (MRAFKWALAIGATLALPLTAQA).

It belongs to the LolA family. As to quaternary structure, monomer.

Its subcellular location is the periplasm. Functionally, participates in the translocation of lipoproteins from the inner membrane to the outer membrane. Only forms a complex with a lipoprotein if the residue after the N-terminal Cys is not an aspartate (The Asp acts as a targeting signal to indicate that the lipoprotein should stay in the inner membrane). This is Outer-membrane lipoprotein carrier protein from Chromohalobacter salexigens (strain ATCC BAA-138 / DSM 3043 / CIP 106854 / NCIMB 13768 / 1H11).